A 685-amino-acid polypeptide reads, in one-letter code: Putative lipase ROG1 (685 aa).

The active-site Charge relay system is the S269.

This sequence belongs to the putative lipase ROG1 family.

This Saccharomyces cerevisiae (strain ATCC 204508 / S288c) (Baker's yeast) protein is Putative lipase ROG1 (ROG1).